The following is a 213-amino-acid chain: Lactobacillus shifted protein (213 aa).

Residues 28-38 (PRFTENAMQPN) show a composition bias toward polar residues. 2 disordered regions span residues 28 to 56 (PRFT…DATP) and 182 to 213 (PTSS…YEQR).

The chain is Lactobacillus shifted protein (lbsA) from Emericella nidulans (strain FGSC A4 / ATCC 38163 / CBS 112.46 / NRRL 194 / M139) (Aspergillus nidulans).